A 989-amino-acid polypeptide reads, in one-letter code: Cellulose synthase A catalytic subunit 4 [UDP-forming] (989 aa).

The Cytoplasmic segment spans residues 1–184 (MMESGVPPCA…SRIIPISKNK (184 aa)). Zn(2+) is bound by residues C9, C12, C20, C23, C28, C31, C43, and C46. The RING-type; degenerate zinc finger occupies 9 to 47 (CAACGDDAHAACRACSYALCKACLDEDAAEGRTTCARCG). Residues 138-149 (KKEKKASAKKAA) show a composition bias toward basic residues. The segment at 138–158 (KKEKKASAKKAAAKAQAPPVE) is disordered. Residues 185-205 (LTPYRAVIIMRLVVLGLFFHY) traverse the membrane as a helical segment. Residues 206 to 213 (RITNPVYS) are Extracellular-facing. Residues 214–234 (AFGLWMTSVICEIWFGFSWIL) form a helical membrane-spanning segment. Residues 235–772 (DQFPKWCPIN…INTIVYPFTS (538 aa)) are Cytoplasmic-facing. Residues S272, K278, E279, and D308 each contribute to the UDP-alpha-D-glucose site. D308 is an active-site residue. A coiled-coil region spans residues 362–389 (VKERRAMKRDYEEYKVRINALVAKAQKT). K449 lines the UDP-alpha-D-glucose pocket. Residues K450 and D474 each coordinate Mn(2+). D688 is a catalytic residue. The helical transmembrane segment at 773–793 (LPLIAYCCLPAICLLTGKFII) threads the bilayer. Residues 794-798 (PTLSN) are Extracellular-facing. A helical membrane pass occupies residues 799 to 819 (AATIWFLGLFISIIVTSVLEL). Residues 820 to 835 (RWSGIGIEDWWRNEQF) are Cytoplasmic-facing. Residues 836–856 (WVIGGVSAHLFAVFQGILKMI) form a helical membrane-spanning segment. Over 857–884 (AGLDTNFTVTAKATDDTEFGELYVFKWT) the chain is Extracellular. N-linked (GlcNAc...) asparagine glycosylation is present at N862. Residues 885–905 (TVLIPPTSILVLNLVGVVAGF) form a helical membrane-spanning segment. At 906–916 (SDALNSGYESW) the chain is on the cytoplasmic side. Residues 917 to 937 (GPLFGKVFFAMWVIMHLYPFL) form a helical membrane-spanning segment. At 938 to 946 (KGLMGRQNR) the chain is on the extracellular side. Residues 947-967 (TPTIVVLWSVLLASVFSLLWV) traverse the membrane as a helical segment. The Cytoplasmic portion of the chain corresponds to 968 to 989 (KIDPFIGSSETTTTNSCANFDC).

It belongs to the glycosyltransferase 2 family. Plant cellulose synthase subfamily. Mn(2+) is required as a cofactor. It depends on Zn(2+) as a cofactor.

Its subcellular location is the cell membrane. It carries out the reaction [(1-&gt;4)-beta-D-glucosyl](n) + UDP-alpha-D-glucose = [(1-&gt;4)-beta-D-glucosyl](n+1) + UDP + H(+). Its pathway is glycan metabolism; plant cellulose biosynthesis. Catalytic subunit of cellulose synthase terminal complexes ('rosettes'), required for beta-1,4-glucan microfibril crystallization, a major mechanism of the cell wall formation. Involved in the secondary cell wall formation. The protein is Cellulose synthase A catalytic subunit 4 [UDP-forming] (CESA4) of Oryza sativa subsp. japonica (Rice).